Here is a 100-residue protein sequence, read N- to C-terminus: Aspartyl/glutamyl-tRNA(Asn/Gln) amidotransferase subunit C (100 aa).

It belongs to the GatC family. In terms of assembly, heterotrimer of A, B and C subunits.

It carries out the reaction L-glutamyl-tRNA(Gln) + L-glutamine + ATP + H2O = L-glutaminyl-tRNA(Gln) + L-glutamate + ADP + phosphate + H(+). The catalysed reaction is L-aspartyl-tRNA(Asn) + L-glutamine + ATP + H2O = L-asparaginyl-tRNA(Asn) + L-glutamate + ADP + phosphate + 2 H(+). Allows the formation of correctly charged Asn-tRNA(Asn) or Gln-tRNA(Gln) through the transamidation of misacylated Asp-tRNA(Asn) or Glu-tRNA(Gln) in organisms which lack either or both of asparaginyl-tRNA or glutaminyl-tRNA synthetases. The reaction takes place in the presence of glutamine and ATP through an activated phospho-Asp-tRNA(Asn) or phospho-Glu-tRNA(Gln). The sequence is that of Aspartyl/glutamyl-tRNA(Asn/Gln) amidotransferase subunit C from Streptococcus mutans serotype c (strain ATCC 700610 / UA159).